The sequence spans 358 residues: Bi-functional coumaroyl CoA and feruloyl CoA ortho-hydroxylase F6H2-2-1 (358 aa).

A Fe2OG dioxygenase domain is found at 200–308 (SKESLLMGSR…RISVPVFVNP (109 aa)). Tyr-216 is a binding site for 2-oxoglutarate. Positions 231, 233, and 289 each coordinate Fe cation. Positions 299 and 301 each coordinate 2-oxoglutarate.

The protein belongs to the iron/ascorbate-dependent oxidoreductase family. L-ascorbate is required as a cofactor. Requires Fe(2+) as cofactor. Mostly expressed in underground stems and stems.

The catalysed reaction is (E)-4-coumaroyl-CoA + 2-oxoglutarate + O2 = (E)-2,4-dihydroxycinnamoyl-CoA + succinate + CO2. It carries out the reaction (E)-feruloyl-CoA + 2-oxoglutarate + O2 = (E)-6-hydroxyferuloyl-CoA + succinate + CO2. The protein operates within phenylpropanoid metabolism. Its function is as follows. 2-oxoglutarate (OG)- and Fe(II)-dependent dioxygenase (2OGD) involved in scopoletin and umbelliferone biosynthesis. Converts feruloyl CoA into 6'-hydroxyferuloyl CoA, and p-coumaroyl CoA into 2,4-dihydroxycinnamoyl-CoA, but has no activity toward caffeoyl-CoA. This chain is Bi-functional coumaroyl CoA and feruloyl CoA ortho-hydroxylase F6H2-2-1, found in Ipomoea batatas (Sweet potato).